We begin with the raw amino-acid sequence, 228 residues long: Lipoprotein-releasing system ATP-binding protein LolD (228 aa).

The ABC transporter domain occupies 6–225 (LEAKDVYKHF…ILHMQDGLWV (220 aa)). 42 to 49 (GASGSGKS) provides a ligand contact to ATP.

Belongs to the ABC transporter superfamily. Lipoprotein translocase (TC 3.A.1.125) family. The complex is composed of two ATP-binding proteins (LolD) and two transmembrane proteins (LolC and LolE).

The protein resides in the cell inner membrane. Functionally, part of the ABC transporter complex LolCDE involved in the translocation of mature outer membrane-directed lipoproteins, from the inner membrane to the periplasmic chaperone, LolA. Responsible for the formation of the LolA-lipoprotein complex in an ATP-dependent manner. In Acinetobacter baylyi (strain ATCC 33305 / BD413 / ADP1), this protein is Lipoprotein-releasing system ATP-binding protein LolD.